A 206-amino-acid chain; its full sequence is Fibroblast growth factor 4 (206 aa).

An N-terminal signal peptide occupies residues 1 to 30 (MSGPGTAAVALLPAVLLALLAPWAGRGGAA).

It belongs to the heparin-binding growth factors family. In terms of assembly, interacts with FGFR1, FGFR2, FGFR3 and FGFR4. Affinity between fibroblast growth factors (FGFs) and their receptors is increased by heparan sulfate glycosaminoglycans that function as coreceptors.

It localises to the secreted. In terms of biological role, plays an important role in the regulation of embryonic development, cell proliferation, and cell differentiation. Required for normal limb and cardiac valve development during embryogenesis. May play a role in embryonic molar tooth bud development via inducing the expression of MSX1, MSX2 and MSX1-mediated expression of SDC1 in dental mesenchyme cells. The sequence is that of Fibroblast growth factor 4 from Homo sapiens (Human).